The sequence spans 235 residues: Transcriptional regulatory protein WalR (235 aa).

Residues 4–117 (KILVVDDEKP…ELLARVKANL (114 aa)) enclose the Response regulatory domain. Asp53 carries the post-translational modification 4-aspartylphosphate. A DNA-binding region (ompR/PhoB-type) is located at residues 132-231 (SNEIHIGSLV…RRGVGYYLRN (100 aa)).

As to quaternary structure, homodimer. In terms of processing, phosphorylated by WalK.

It is found in the cytoplasm. Functionally, member of the two-component regulatory system WalK/WalR involved in the regulation of the ftsAZ operon, the yocH, ykvT, cwlO, lytE, ydjM, yjeA, yoeB genes and the tagAB and tagDEF operons. Binds to the ftsAZ P1 promoter sequence in vitro. WalR has been shown to directly bind to the regulatory regions of yocH, ykvT, tagAB/tagDEF. Activates cwlO, lytE and ydjM and represses yoeB and yjeA. The sequence is that of Transcriptional regulatory protein WalR from Bacillus subtilis (strain 168).